A 57-amino-acid polypeptide reads, in one-letter code: UPF0057 membrane protein T23F2.4 (57 aa).

A run of 2 helical transmembrane segments spans residues 3-23 (ITCMDIPKFLFALLLPPVGVF) and 36-56 (ILLTILGYIPGIIYACYIILA).

It belongs to the UPF0057 (PMP3) family.

The protein localises to the membrane. This chain is UPF0057 membrane protein T23F2.4, found in Caenorhabditis elegans.